A 91-amino-acid chain; its full sequence is C-C motif chemokine 5 (91 aa).

Positions 1 to 23 are cleaved as a signal peptide; it reads MKISAAALTIILTAAALCTPAPA. Intrachain disulfides connect Cys33/Cys57 and Cys34/Cys73.

Belongs to the intercrine beta (chemokine CC) family. As to expression, T-cell and macrophage specific.

It localises to the secreted. In terms of biological role, chemoattractant for blood monocytes, memory T-helper cells and eosinophils. Causes the release of histamine from basophils and activates eosinophils. May activate several chemokine receptors including CCR1, CCR3, CCR4 and CCR5. May also be an agonist of the G protein-coupled receptor GPR75. Together with GPR75, may play a role in neuron survival through activation of a downstream signaling pathway involving the PI3, Akt and MAP kinases. By activating GPR75 may also play a role in insulin secretion by islet cells. The polypeptide is C-C motif chemokine 5 (Ccl5) (Mus musculus (Mouse)).